The following is a 205-amino-acid chain: Heme-binding protein 2 (205 aa).

A disordered region spans residues 1–37 (MAEEPEPDLGVAEGSEDQALEMPSWKAPEDIDPQPGS). An N-acetylalanine modification is found at Ala-2. The residue at position 181 (Ser-181) is a Phosphoserine.

The protein belongs to the HEBP family. Monomer. Interacts with LRPPRC. May interact with BCL2L1; an interaction with BCL2L1 was observed using a peptide, but not with the full-length protein. The full-length protein would have to undergo a major conformation change for the interaction to occur. Interacts with PDCD6.

It is found in the cytoplasm. Its subcellular location is the mitochondrion. In terms of biological role, can promote mitochondrial permeability transition and facilitate necrotic cell death under different types of stress conditions. May have low affinity for heme. In Mus musculus (Mouse), this protein is Heme-binding protein 2 (Hebp2).